We begin with the raw amino-acid sequence, 131 residues long: Large ribosomal subunit protein bL12c (131 aa).

The segment at 107 to 131 is disordered; that stretch reads QGVSKDDAEASKKQLEDAGAKVKIS. Residues 110 to 131 show a composition bias toward basic and acidic residues; that stretch reads SKDDAEASKKQLEDAGAKVKIS.

The protein belongs to the bacterial ribosomal protein bL12 family. As to quaternary structure, homodimer. Part of the ribosomal stalk of the 50S ribosomal subunit. Forms a multimeric L10(L12)X complex, where L10 forms an elongated spine to which 2 to 4 L12 dimers bind in a sequential fashion. Binds GTP-bound translation factors.

Its subcellular location is the plastid. It is found in the chloroplast. In terms of biological role, forms part of the ribosomal stalk which helps the ribosome interact with GTP-bound translation factors. Is thus essential for accurate translation. The polypeptide is Large ribosomal subunit protein bL12c (Chlorella vulgaris (Green alga)).